Reading from the N-terminus, the 259-residue chain is AM-toxin biosynthesis protein 11 (259 aa).

The disordered stretch occupies residues 39 to 66 (RRSRRRPEEESIQSLSKHVSTTTQPCPT). Residues 50-64 (IQSLSKHVSTTTQPC) show a composition bias toward polar residues.

Its pathway is mycotoxin biosynthesis. Part of the gene clusters that mediate the biosynthesis of AM-toxins, host-selective toxins (HSTs) causing Alternaria blotch on apple, a worldwide distributed disease. AM-toxins are cyclic depsipeptides containing the 3 residues 2-hydroxy-isovaleric acid (2-HIV), dehydroalanine, L-alanine which are common for all 3 AM-toxins I to III. The fourth precursor is L-alpha-amino-methoxyphenyl-valeric acid (L-Amv) for AM-toxin I, L-alpha-amino-phenyl-valeric acid (L-Apv) for AM-toxin II, and L-alpha-amino-hydroxyphenyl-valeric acid (L-Ahv) for AM-toxin III. AM-toxins have two target sites for affecting susceptible apple cells; they cause invagination of the plasma membrane and electrolyte loss and chloroplast disorganization. The non-ribosomal peptide synthetase AMT1 contains 4 catalytic modules and is responsible for activation of each residue in AM-toxin. The aldo-keto reductase AMT2 catalyzes the conversion of 2-keto-isovaleric acid (2-KIV) to 2-hydroxy-isovaleric acid (2-HIV), one of the precursor residues incorporated by AMT1 during AM-toxin biosynthesis, by reduction of its ketone to an alcohol. The cytochrome P450 monooxygenase AMT3 and the thioesterase AMT4 are also important for AM-toxin production, but their exact function within the AM-toxin biosynthesis are not known yet. Up to 21 proteins (including AMT1 to AMT4) are predicted to be involved in AM-toxin biosynthesis since their expression ishighly up-regulated in AM-toxin-producing cultures. This is AM-toxin biosynthesis protein 11 from Alternaria alternata (Alternaria rot fungus).